The primary structure comprises 131 residues: Histone H2B.2 (131 aa).

Over residues 1–20 the composition is skewed to basic and acidic residues; it reads MAPPKAEKKPASKAPAEKKP. Residues 1–39 form a disordered region; that stretch reads MAPPKAEKKPASKAPAEKKPAAKKTASSTDAKKRTKTRK. Residues Lys8 and Lys9 each carry the N6-acetyllysine; alternate modification. Glycyl lysine isopeptide (Lys-Gly) (interchain with G-Cter in SUMO); alternate cross-links involve residues Lys8 and Lys9. Residue Ser12 is modified to Phosphoserine. Position 13 is an N6-acetyllysine (Lys13). N6-acetyllysine; alternate is present on Lys18. A Glycyl lysine isopeptide (Lys-Gly) (interchain with G-Cter in SUMO); alternate cross-link involves residue Lys18. Lys19 participates in a covalent cross-link: Glycyl lysine isopeptide (Lys-Gly) (interchain with G-Cter in SUMO). A Glycyl lysine isopeptide (Lys-Gly) (interchain with G-Cter in ubiquitin) cross-link involves residue Lys125.

This sequence belongs to the histone H2B family. The nucleosome is a histone octamer containing two molecules each of H2A, H2B, H3 and H4 assembled in one H3-H4 heterotetramer and two H2A-H2B heterodimers. The octamer wraps approximately 147 bp of DNA. Post-translationally, monoubiquitinated to form H2BK123ub1. H2BK123ub1 gives a specific tag for epigenetic transcriptional activation and is also prerequisite for H3K4me and H3K79me formation. H2BK123ub1 also modulates the formation of double-strand breaks during meiosis and is a prerequisite for DNA-damage checkpoint activation. In terms of processing, phosphorylated by STE20 to form H2BS10ph during progression through meiotic prophase. May be correlated with chromosome condensation. Acetylated by GCN5 to form H2BK11ac and H2BK16ac. H2BK16ac can also be formed by ESA1. Acetylation of N-terminal lysines and particularly formation of H2BK11acK16ac has a positive effect on transcription. Post-translationally, sumoylation to form H2BK6su or H2BK7su, and probably also H2BK16su or H2BK17su, occurs preferentially near the telomeres and represses gene transcription.

The protein resides in the nucleus. It localises to the chromosome. Its function is as follows. Core component of nucleosome. Nucleosomes wrap and compact DNA into chromatin, limiting DNA accessibility to the cellular machineries which require DNA as a template. Histones thereby play a central role in transcription regulation, DNA repair, DNA replication and chromosomal stability. DNA accessibility is regulated via a complex set of post-translational modifications of histones, also called histone code, and nucleosome remodeling. The sequence is that of Histone H2B.2 (HTB2) from Scheffersomyces stipitis (strain ATCC 58785 / CBS 6054 / NBRC 10063 / NRRL Y-11545) (Yeast).